Here is a 279-residue protein sequence, read N- to C-terminus: Putative pyruvate, phosphate dikinase regulatory protein (279 aa).

ADP is bound at residue 153-160 (GVSRTSKT).

The protein belongs to the pyruvate, phosphate/water dikinase regulatory protein family. PDRP subfamily.

The catalysed reaction is N(tele)-phospho-L-histidyl/L-threonyl-[pyruvate, phosphate dikinase] + ADP = N(tele)-phospho-L-histidyl/O-phospho-L-threonyl-[pyruvate, phosphate dikinase] + AMP + H(+). It carries out the reaction N(tele)-phospho-L-histidyl/O-phospho-L-threonyl-[pyruvate, phosphate dikinase] + phosphate + H(+) = N(tele)-phospho-L-histidyl/L-threonyl-[pyruvate, phosphate dikinase] + diphosphate. Functionally, bifunctional serine/threonine kinase and phosphorylase involved in the regulation of the pyruvate, phosphate dikinase (PPDK) by catalyzing its phosphorylation/dephosphorylation. The chain is Putative pyruvate, phosphate dikinase regulatory protein from Rhodopseudomonas palustris (strain ATCC BAA-98 / CGA009).